Consider the following 175-residue polypeptide: Transcription factor E (175 aa).

One can recognise an HTH TFE/IIEalpha-type domain in the interval 3-88 (ENPLIQQVLF…TWKPSLEKVP (86 aa)).

The protein belongs to the TFE family. As to quaternary structure, monomer. Interaction with RNA polymerase subunits RpoF and RpoE is necessary for Tfe stimulatory transcription activity. Able to interact with Tbp and RNA polymerase in the absence of DNA promoter. Interacts both with the preinitiation and elongation complexes.

Functionally, transcription factor that plays a role in the activation of archaeal genes transcribed by RNA polymerase. Facilitates transcription initiation by enhancing TATA-box recognition by TATA-box-binding protein (Tbp), and transcription factor B (Tfb) and RNA polymerase recruitment. Not absolutely required for transcription in vitro, but particularly important in cases where Tbp or Tfb function is not optimal. It dynamically alters the nucleic acid-binding properties of RNA polymerases by stabilizing the initiation complex and destabilizing elongation complexes. Seems to translocate with the RNA polymerase following initiation and acts by binding to the non template strand of the transcription bubble in elongation complexes. The protein is Transcription factor E of Methanococcus maripaludis (strain DSM 14266 / JCM 13030 / NBRC 101832 / S2 / LL).